We begin with the raw amino-acid sequence, 949 residues long: MAM domain-containing glycosylphosphatidylinositol anchor protein 2 (949 aa).

A signal peptide spans 1-25 (MDLVYGLVWLLTVLLEGISGQGVYA). 2 consecutive Ig-like domains span residues 27 to 127 (PTVR…IRVD) and 134 to 232 (PVVT…KMVS). 2 cysteine pairs are disulfide-bonded: C62–C110 and C159–C216. N-linked (GlcNAc...) asparagine glycans are attached at residues N92, N213, and N237. Ig-like domains lie at 242–328 (PSIK…NIIV), 340–436 (PDPY…VNIS), 442–533 (PNLT…ALVQ), and 540–627 (PAVE…FLVT). Disulfide bonds link C264-C310 and C359-C417. Residues N434, N443, N504, N610, and N703 are each glycosylated (N-linked (GlcNAc...) asparagine). 2 disulfides stabilise this stretch: C465–C515 and C561–C611. In terms of domain architecture, Fibronectin type-III spans 638–738 (DTYNPVWQNR…TIRVIKYTGE (101 aa)). Residues 739 to 914 (FHCGFEDGNI…VSIAEGECAK (176 aa)) form the MAM domain. D924 carries GPI-anchor amidated aspartate lipidation. Residues 925–949 (GAVGILVHIWLFPVIILISILSPRR) constitute a propeptide, removed in mature form.

Interacts (through the Ig-like domains) with NLGN2.

The protein resides in the cell membrane. Functionally, may be involved in cell-cell interactions. This Mus musculus (Mouse) protein is MAM domain-containing glycosylphosphatidylinositol anchor protein 2 (Mdga2).